The primary structure comprises 282 residues: MATYLIGDVHGCYDELIALLHKVEFTPGKDTLWLTGDLVARGPGSLDVLRYVKSLGDSVRLVLGNHDLHLLAVFAGISRNKPKDRLTPLLEAPDADELLNWLRRQPLLQIDKEKKLVMAHAGITPQWDLQTAKECARDVEAVLSSDSYPFFLDAMYGDMPNNWSPELRGLGRLRFITNAFTRMRFCFPNGQLDMYSKESPEEAPAPLKPWFAIPGPVAEEYNIAFGHWASLEGKGTPEGIYALDTGCCWGGTLTCLRWEDKQYFVQPSNRHKDLSEGEAVAS.

The protein belongs to the Ap4A hydrolase family.

The enzyme catalyses P(1),P(4)-bis(5'-adenosyl) tetraphosphate + H2O = 2 ADP + 2 H(+). In terms of biological role, hydrolyzes diadenosine 5',5'''-P1,P4-tetraphosphate to yield ADP. The polypeptide is Bis(5'-nucleosyl)-tetraphosphatase, symmetrical (Escherichia coli O45:K1 (strain S88 / ExPEC)).